The primary structure comprises 318 residues: Aspartate carbamoyltransferase catalytic subunit (318 aa).

Positions 59 and 60 each coordinate carbamoyl phosphate. Position 87 (Lys87) interacts with L-aspartate. Residues Arg109, His137, and Gln140 each contribute to the carbamoyl phosphate site. 2 residues coordinate L-aspartate: Arg170 and Arg224. Positions 265 and 266 each coordinate carbamoyl phosphate.

This sequence belongs to the aspartate/ornithine carbamoyltransferase superfamily. ATCase family. In terms of assembly, heterododecamer (2C3:3R2) of six catalytic PyrB chains organized as two trimers (C3), and six regulatory PyrI chains organized as three dimers (R2).

The catalysed reaction is carbamoyl phosphate + L-aspartate = N-carbamoyl-L-aspartate + phosphate + H(+). It participates in pyrimidine metabolism; UMP biosynthesis via de novo pathway; (S)-dihydroorotate from bicarbonate: step 2/3. In terms of biological role, catalyzes the condensation of carbamoyl phosphate and aspartate to form carbamoyl aspartate and inorganic phosphate, the committed step in the de novo pyrimidine nucleotide biosynthesis pathway. This is Aspartate carbamoyltransferase catalytic subunit from Rhizobium rhizogenes (strain K84 / ATCC BAA-868) (Agrobacterium radiobacter).